We begin with the raw amino-acid sequence, 234 residues long: MQLITTENKLAGSKKALEIIEKGITSGEVNTLGLATGSTPETLYAELVKSDVDTKNVTTTNLDEYVGLAADDPNSYHYYMNDLLFSKKAFKESFLPNGEATDAEAECARYEGILSEHPIDIQVLGIGTNGHIGFNEPGTSFDSLTHKVVLTDSTREANKRFFEREEDVPTHAYSMGIKSIMNAKKIILLAFGENKAQAIKETIKGPVDVNCPASVLQNHPDVTVILDNEAASLL.

D63 acts as the Proton acceptor; for enolization step in catalysis. N129 acts as the For ring-opening step in catalysis. H131 functions as the Proton acceptor; for ring-opening step in the catalytic mechanism. E136 (for ring-opening step) is an active-site residue.

This sequence belongs to the glucosamine/galactosamine-6-phosphate isomerase family. NagB subfamily.

It carries out the reaction alpha-D-glucosamine 6-phosphate + H2O = beta-D-fructose 6-phosphate + NH4(+). It participates in amino-sugar metabolism; N-acetylneuraminate degradation; D-fructose 6-phosphate from N-acetylneuraminate: step 5/5. Catalyzes the reversible isomerization-deamination of glucosamine 6-phosphate (GlcN6P) to form fructose 6-phosphate (Fru6P) and ammonium ion. This chain is Glucosamine-6-phosphate deaminase, found in Listeria innocua serovar 6a (strain ATCC BAA-680 / CLIP 11262).